The primary structure comprises 1047 residues: Helicase-like transcription factor CHR27 (1047 aa).

The span at 1 to 11 (MDSAIEISSGS) shows a compositional bias: low complexity. Disordered stretches follow at residues 1-89 (MDSA…SGSG), 103-130 (RTLPPSFNSPPLPARSGTNNISNASGSR), and 145-174 (KRTLPPSFNPPPLPSRSGTNNIRNAGGSRF). 2 stretches are compositionally biased toward polar residues: residues 52–88 (TNQAPPNGASSDTSRPGVSKPFTGNGNTVNSRISSGS) and 118–128 (SGTNNISNASG). Residues 296–597 (ETSSFNCPGG…YSYFRFLRYD (302 aa)) form the Helicase ATP-binding domain. 309–316 (DDQGLGKT) contacts ATP. 2 disordered regions span residues 349–407 (ADDE…TRAF) and 511–533 (VGASKKSKRRGRKSTNDTSSEPD). Basic and acidic residues predominate over residues 354 to 368 (DNAKHESGSHVKPEL). The span at 370-379 (VSSNSETSVL) shows a compositional bias: polar residues. The segment covering 385–400 (DENDSSDMEKAEDEEA) has biased composition (acidic residues). The span at 511-523 (VGASKKSKRRGRK) shows a compositional bias: basic residues. The RING-type; degenerate zinc finger occupies 751–790 (CYECNEPPEKPVVTLCGHIFCYECVLEYITGDENTCPVPR). A compositionally biased stretch (polar residues) spans 851-868 (QPDSPNSAQHGQMPSSSR). Residues 851–873 (QPDSPNSAQHGQMPSSSRPYDDD) are disordered. Residues 887-1042 (SPSQGAVKTI…ATRLTVDDLK (156 aa)) form the Helicase C-terminal domain.

Belongs to the SNF2/RAD54 helicase family. RAD16 subfamily. As to quaternary structure, interacts with SUVR2. Interacts with itself.

Its subcellular location is the nucleus. Probable helicase-like transcription factor involved in transcriptional gene silencing. Associates with SUVR2 and contributes to transcriptional gene silencing at RNA-directed DNA methylation (RdDM) target loci but also at RdDM-independent target loci. May be involved in nucleosome positioning to form ordered nucleosome arrays on chromatin. Associates with SUVR2 and functions redundantly with FRG2. Required for the efficient methylation of a broad range of RdDM target loci. The polypeptide is Helicase-like transcription factor CHR27 (Arabidopsis thaliana (Mouse-ear cress)).